We begin with the raw amino-acid sequence, 225 residues long: Ribonuclease 3 (225 aa).

An RNase III domain is found at 5-127; the sequence is VTELYKTIDY…IIGAVFLDSD (123 aa). E40 lines the Mg(2+) pocket. Residue D44 is part of the active site. Residues D113 and E116 each contribute to the Mg(2+) site. E116 is a catalytic residue. Positions 154 to 223 constitute a DRBM domain; it reads DPKTLLQEHL…AEKALKILKN (70 aa).

The protein belongs to the ribonuclease III family. As to quaternary structure, homodimer. The cofactor is Mg(2+).

The protein localises to the cytoplasm. It catalyses the reaction Endonucleolytic cleavage to 5'-phosphomonoester.. Its function is as follows. Digests double-stranded RNA. Involved in the processing of primary rRNA transcript to yield the immediate precursors to the large and small rRNAs (23S and 16S). Processes some mRNAs, and tRNAs when they are encoded in the rRNA operon. Processes pre-crRNA and tracrRNA of type II CRISPR loci if present in the organism. The polypeptide is Ribonuclease 3 (Pseudoalteromonas translucida (strain TAC 125)).